Here is a 503-residue protein sequence, read N- to C-terminus: UDP-N-acetylmuramate--L-alanine ligase (503 aa).

120-126 (GTHGKTS) contacts ATP.

It belongs to the MurCDEF family.

Its subcellular location is the cytoplasm. It carries out the reaction UDP-N-acetyl-alpha-D-muramate + L-alanine + ATP = UDP-N-acetyl-alpha-D-muramoyl-L-alanine + ADP + phosphate + H(+). It participates in cell wall biogenesis; peptidoglycan biosynthesis. Functionally, cell wall formation. The protein is UDP-N-acetylmuramate--L-alanine ligase of Rhodococcus jostii (strain RHA1).